We begin with the raw amino-acid sequence, 281 residues long: HTH-type transcriptional activator RamA (281 aa).

In terms of domain architecture, HTH luxR-type spans 213–278 (RIKQTTKLSA…EAVNAARRIG (66 aa)).

RamA is a master regulator of acetate metabolism. It positively controls the expression of acnA, aceA, aceB, ack, pta and ramB genes in the presence of acetate. RamA is also a positive regulator of rpf2 gene expression during growth on glucose as the sole carbon source. The protein is HTH-type transcriptional activator RamA of Corynebacterium glutamicum (strain ATCC 13032 / DSM 20300 / JCM 1318 / BCRC 11384 / CCUG 27702 / LMG 3730 / NBRC 12168 / NCIMB 10025 / NRRL B-2784 / 534).